Reading from the N-terminus, the 344-residue chain is MSTILTNTWTRREKRIEGHAKILAIGTAIPANWVDQTTYPDFYFRITNSEHLLEHKEKFRRICNKSKIRKRHLVITEELLKKNPNLCTYNEASLNTRQDILVSEVPKLGKEAAMKAIKEWGRPISEITHLVFCTSSGVDMPGADFQLAKLLGLSSSVNRLMMYQQGCNAGAAMLRLAKDLAENNKGGRVLVVCSEVMLNVFRGPSLEQEDYLLAQCLFGDGSAAVIVGTEPRPGLETPLFELVSAAQTTIPDTDSHLKLHLREMGLTFHCSKAVPSLITQNVEDYLVKAFEPFGISDWNSIFWILHPGGIAILDRVEEKLGLEPEKLRASRDVLSESGNLTSAC.

The active site involves Cys-167.

The protein belongs to the thiolase-like superfamily. Chalcone/stilbene synthases family.

The enzyme catalyses (E)-4-coumaroyl-CoA + 3 malonyl-CoA + 3 H(+) = 2',4,4',6'-tetrahydroxychalcone + 3 CO2 + 4 CoA. It functions in the pathway secondary metabolite biosynthesis; flavonoid biosynthesis. In terms of biological role, the primary product of this enzyme is 4,2',4',6'-tetrahydroxychalcone (also termed naringenin-chalcone or chalcone) which can under specific conditions spontaneously isomerize into naringenin. The chain is Chalcone synthase A (CHSA) from Ipomoea nil (Japanese morning glory).